The following is a 366-amino-acid chain: UDP-N-acetylglucosamine--N-acetylmuramyl-(pentapeptide) pyrophosphoryl-undecaprenol N-acetylglucosamine transferase (366 aa).

Residues 10–12 (TGG), asparagine 124, arginine 166, serine 196, and glutamine 297 contribute to the UDP-N-acetyl-alpha-D-glucosamine site.

Belongs to the glycosyltransferase 28 family. MurG subfamily.

It localises to the cell membrane. It carries out the reaction di-trans,octa-cis-undecaprenyl diphospho-N-acetyl-alpha-D-muramoyl-L-alanyl-D-glutamyl-meso-2,6-diaminopimeloyl-D-alanyl-D-alanine + UDP-N-acetyl-alpha-D-glucosamine = di-trans,octa-cis-undecaprenyl diphospho-[N-acetyl-alpha-D-glucosaminyl-(1-&gt;4)]-N-acetyl-alpha-D-muramoyl-L-alanyl-D-glutamyl-meso-2,6-diaminopimeloyl-D-alanyl-D-alanine + UDP + H(+). It functions in the pathway cell wall biogenesis; peptidoglycan biosynthesis. Functionally, cell wall formation. Catalyzes the transfer of a GlcNAc subunit on undecaprenyl-pyrophosphoryl-MurNAc-pentapeptide (lipid intermediate I) to form undecaprenyl-pyrophosphoryl-MurNAc-(pentapeptide)GlcNAc (lipid intermediate II). The polypeptide is UDP-N-acetylglucosamine--N-acetylmuramyl-(pentapeptide) pyrophosphoryl-undecaprenol N-acetylglucosamine transferase (Alkaliphilus metalliredigens (strain QYMF)).